The primary structure comprises 383 residues: uncharacterized protein (383 aa).

Belongs to the peptidase M20 family.

This is an uncharacterized protein from Staphylococcus epidermidis (strain ATCC 35984 / DSM 28319 / BCRC 17069 / CCUG 31568 / BM 3577 / RP62A).